Consider the following 207-residue polypeptide: CASP-like protein 1D1 (207 aa).

The Cytoplasmic segment spans residues 1-40 (MATVDGTTAPSSGGKTATVALESGGGRYGGPAPAKCSGAN). A helical transmembrane segment spans residues 41–61 (LALRALLFAVSLSALVVLVTA). The Extracellular portion of the chain corresponds to 62–89 (KQTVMVPFVIRPPQFILAPVPAKYTHSP). The chain crosses the membrane as a helical span at residues 90 to 110 (ALIYLLAALCATCFYSLITAI). Residues 111 to 124 (SSVRLLSSSACSAK) are Cytoplasmic-facing. Residues 125–145 (TLFYLILLDVFYAAVMASATG) traverse the membrane as a helical segment. Residues 146 to 176 (TAGAVAWVGLKGNSHTRWNKICNVYGKFCRH) are Extracellular-facing. The helical transmembrane segment at 177–197 (IGSSTFLALIAAIVLVLLAFL) threads the bilayer. The Cytoplasmic portion of the chain corresponds to 198 to 207 (NAYSLYRRSR).

This sequence belongs to the Casparian strip membrane proteins (CASP) family. In terms of assembly, homodimer and heterodimers.

The protein localises to the cell membrane. The protein is CASP-like protein 1D1 of Oryza sativa subsp. japonica (Rice).